The sequence spans 343 residues: DNA repair and recombination protein RadA (343 aa).

107 to 114 (GEFGAGKS) is a binding site for ATP.

This sequence belongs to the eukaryotic RecA-like protein family.

In terms of biological role, involved in DNA repair and in homologous recombination. Binds and assemble on single-stranded DNA to form a nucleoprotein filament. Hydrolyzes ATP in a ssDNA-dependent manner and promotes DNA strand exchange between homologous DNA molecules. The polypeptide is DNA repair and recombination protein RadA (Haloquadratum walsbyi (strain DSM 16790 / HBSQ001)).